The chain runs to 124 residues: Large ribosomal subunit protein bL12 (124 aa).

This sequence belongs to the bacterial ribosomal protein bL12 family. In terms of assembly, homodimer. Part of the ribosomal stalk of the 50S ribosomal subunit. Forms a multimeric L10(L12)X complex, where L10 forms an elongated spine to which 2 to 4 L12 dimers bind in a sequential fashion. Binds GTP-bound translation factors.

Its function is as follows. Forms part of the ribosomal stalk which helps the ribosome interact with GTP-bound translation factors. Is thus essential for accurate translation. In Burkholderia cenocepacia (strain ATCC BAA-245 / DSM 16553 / LMG 16656 / NCTC 13227 / J2315 / CF5610) (Burkholderia cepacia (strain J2315)), this protein is Large ribosomal subunit protein bL12.